The chain runs to 696 residues: Polyribonucleotide nucleotidyltransferase (696 aa).

Mg(2+)-binding residues include D483 and D489. The region spanning 550-609 (PRITTIYVKTDKIRDVIGSGGKNIRGITEATGVTIDIDDTGKINIASTDKAACDMAIKMI) is the KH domain. The 69-residue stretch at 619–687 (GKLYMGLVKK…KQGKIKLSRK (69 aa)) folds into the S1 motif domain.

This sequence belongs to the polyribonucleotide nucleotidyltransferase family. Mg(2+) is required as a cofactor.

It localises to the cytoplasm. It carries out the reaction RNA(n+1) + phosphate = RNA(n) + a ribonucleoside 5'-diphosphate. Its function is as follows. Involved in mRNA degradation. Catalyzes the phosphorolysis of single-stranded polyribonucleotides processively in the 3'- to 5'-direction. In Geotalea daltonii (strain DSM 22248 / JCM 15807 / FRC-32) (Geobacter daltonii), this protein is Polyribonucleotide nucleotidyltransferase.